The primary structure comprises 454 residues: F-box/WD repeat-containing protein 2 (454 aa).

The 48-residue stretch at 54–101 folds into the F-box domain; sequence RDFLKLLPLELSFYLLKWLDPQTLLTCCLVSKQWNKVISACTEVWQTA. 7 WD repeats span residues 139-175, 179-213, 217-255, 259-306, 313-352, 364-403, and 410-452; these read FETS…LWDV, QCVY…CWEW, ARTQ…VWAL, TCLN…IWPI, KCLK…QWDF, PEIA…RWPL, and KRGS…LWKE. The residue at position 298 (K298) is an N6-acetyllysine.

In terms of assembly, directly interacts with SKP1 and CUL1.

In terms of biological role, substrate-recognition component of the SCF (SKP1-CUL1-F-box protein)-type E3 ubiquitin ligase complex. The sequence is that of F-box/WD repeat-containing protein 2 (FBXW2) from Homo sapiens (Human).